The following is a 179-amino-acid chain: Exosome complex component Csl4 (179 aa).

Residues 58 to 137 form the S1 motif domain; it reads GDVVLGRVVD…RLSTKEEEMG (80 aa). Positions 143, 146, 159, and 162 each coordinate Zn(2+).

Belongs to the CSL4 family. Component of the archaeal exosome complex. Forms a trimer of Rrp4 and/or Csl4 subunits. The trimer associates with a hexameric ring-like arrangement composed of 3 Rrp41-Rrp42 heterodimers. Interacts with DnaG.

The protein resides in the cytoplasm. Functionally, non-catalytic component of the exosome, which is a complex involved in RNA degradation. Increases the RNA binding and the efficiency of RNA degradation. Helpful for the interaction of the exosome with A-poor RNAs. This is Exosome complex component Csl4 from Archaeoglobus fulgidus (strain ATCC 49558 / DSM 4304 / JCM 9628 / NBRC 100126 / VC-16).